The following is a 563-amino-acid chain: NAD-dependent malic enzyme (563 aa).

Tyrosine 101 (proton donor) is an active-site residue. Arginine 154 serves as a coordination point for NAD(+). Lysine 172 functions as the Proton acceptor in the catalytic mechanism. Positions 243, 244, and 267 each coordinate a divalent metal cation. Aspartate 267 and asparagine 416 together coordinate NAD(+).

Belongs to the malic enzymes family. Homotetramer. The cofactor is Mg(2+). Mn(2+) serves as cofactor.

The catalysed reaction is (S)-malate + NAD(+) = pyruvate + CO2 + NADH. The enzyme catalyses oxaloacetate + H(+) = pyruvate + CO2. The sequence is that of NAD-dependent malic enzyme from Pseudomonas syringae pv. tomato (strain ATCC BAA-871 / DC3000).